The chain runs to 314 residues: uncharacterized protein (314 aa).

2 helical membrane-spanning segments follow: residues 23–43 and 98–118; these read LALG…MALF and MASG…GPLT. Residues 165–184 show a composition bias toward gly residues; the sequence is GLGSGAGGGDVGGGGAGGTT. Positions 165–314 are disordered; the sequence is GLGSGAGGGD…APDEKTDAGE (150 aa). Residues 190–202 are compositionally biased toward pro residues; sequence GPPPVPTSSPPTT. Composition is skewed to low complexity over residues 203-212 and 219-232; these read PAGAPTKSAT and ASPA…AGMP. A helical transmembrane segment spans residues 221-241; that stretch reads PASAHMGAAGMPMVPPGAMGA. The segment covering 294-314 has biased composition (basic and acidic residues); sequence LLPEHKDFGRIAPDEKTDAGE.

It localises to the cell membrane. This is an uncharacterized protein from Mycobacterium tuberculosis (strain ATCC 25618 / H37Rv).